The chain runs to 255 residues: S-adenosyl-L-methionine-dependent uroporphyrinogen III methyltransferase (255 aa).

S-adenosyl-L-homocysteine is bound by residues P15, 91–93, 121–122, M175, and A232; these read GGD and TS.

Belongs to the precorrin methyltransferase family. As to quaternary structure, homodimer.

The enzyme catalyses uroporphyrinogen III + 2 S-adenosyl-L-methionine = precorrin-2 + 2 S-adenosyl-L-homocysteine + H(+). The protein operates within porphyrin-containing compound metabolism; siroheme biosynthesis; precorrin-2 from uroporphyrinogen III: step 1/1. In terms of biological role, involved in the archaeal biosynthesis of heme. Catalyzes the methylation of carbons 2 and 7 of uroporphyrinogen-III (UROGEN) to yield precorrin-2. It does not catalyze the overmethylation of precorrin-2 to trimethylpyrrocorphin. This is S-adenosyl-L-methionine-dependent uroporphyrinogen III methyltransferase from Methanosarcina barkeri (strain Fusaro / DSM 804).